We begin with the raw amino-acid sequence, 101 residues long: Large ribosomal subunit protein uL24 (101 aa).

The protein belongs to the universal ribosomal protein uL24 family. Part of the 50S ribosomal subunit.

In terms of biological role, one of two assembly initiator proteins, it binds directly to the 5'-end of the 23S rRNA, where it nucleates assembly of the 50S subunit. Functionally, one of the proteins that surrounds the polypeptide exit tunnel on the outside of the subunit. The polypeptide is Large ribosomal subunit protein uL24 (Paracoccus denitrificans (strain Pd 1222)).